The following is an 82-amino-acid chain: MNTFLWILLVIIALLAGLVGGTFIARKQMEKYLEENPPLNEDVIRNMMSQMGQKPSEAKVQQVVRQMNKQQKAAKAKAKKKK.

The helical transmembrane segment at 4 to 24 threads the bilayer; the sequence is FLWILLVIIALLAGLVGGTFI.

Belongs to the UPF0154 family.

Its subcellular location is the membrane. The chain is UPF0154 protein SMU_1719c from Streptococcus mutans serotype c (strain ATCC 700610 / UA159).